Reading from the N-terminus, the 333-residue chain is Probable tRNA pseudouridine synthase B (333 aa).

Asp-66 serves as the catalytic Nucleophile. One can recognise a PUA domain in the interval 233–308 (LKKIIVKDSA…EVVEITRVIM (76 aa)).

This sequence belongs to the pseudouridine synthase TruB family. Type 2 subfamily.

It carries out the reaction uridine(55) in tRNA = pseudouridine(55) in tRNA. Functionally, could be responsible for synthesis of pseudouridine from uracil-55 in the psi GC loop of transfer RNAs. In Methanococcus maripaludis (strain C5 / ATCC BAA-1333), this protein is Probable tRNA pseudouridine synthase B.